The sequence spans 123 residues: Cell division protein SepF (123 aa).

This sequence belongs to the SepF family. As to quaternary structure, homodimer. Interacts with FtsZ.

The protein resides in the cytoplasm. In terms of biological role, cell division protein that is part of the divisome complex and is recruited early to the Z-ring. Probably stimulates Z-ring formation, perhaps through the cross-linking of FtsZ protofilaments. Its function overlaps with FtsA. The chain is Cell division protein SepF from Tropheryma whipplei (strain TW08/27) (Whipple's bacillus).